A 121-amino-acid polypeptide reads, in one-letter code: MSISQDDILNAVAEMSVLQVVELIKAFEEKFGVSAAAASAGPAVAAVAAEEQTEFNVMLLEAGEKKVNVIKAVRELTGLGLKEAKAVVDGAPAQVLEAVSKDAADKAKAVLEEAGAKVELK.

It belongs to the bacterial ribosomal protein bL12 family. In terms of assembly, homodimer. Part of the ribosomal stalk of the 50S ribosomal subunit. Forms a multimeric L10(L12)X complex, where L10 forms an elongated spine to which 2 to 4 L12 dimers bind in a sequential fashion. Binds GTP-bound translation factors.

Forms part of the ribosomal stalk which helps the ribosome interact with GTP-bound translation factors. Is thus essential for accurate translation. In Pseudomonas fluorescens (strain SBW25), this protein is Large ribosomal subunit protein bL12.